The primary structure comprises 181 residues: Copper-resistant cuproprotein CopI (181 aa).

A signal peptide spans methionine 1–alanine 24. 4 residues coordinate Cu(2+): histidine 79, cysteine 163, histidine 168, and methionine 173.

The protein belongs to the CopI family.

It localises to the periplasm. Its function is as follows. Involved in copper tolerance. The polypeptide is Copper-resistant cuproprotein CopI (Pseudomonas aeruginosa (strain ATCC 15692 / DSM 22644 / CIP 104116 / JCM 14847 / LMG 12228 / 1C / PRS 101 / PAO1)).